Here is a 206-residue protein sequence, read N- to C-terminus: Small ribosomal subunit protein uS4 (206 aa).

Positions 96-156 (TRLDNVVYRM…EKSKKQARII (61 aa)) constitute an S4 RNA-binding domain.

This sequence belongs to the universal ribosomal protein uS4 family. As to quaternary structure, part of the 30S ribosomal subunit. Contacts protein S5. The interaction surface between S4 and S5 is involved in control of translational fidelity.

Its function is as follows. One of the primary rRNA binding proteins, it binds directly to 16S rRNA where it nucleates assembly of the body of the 30S subunit. Functionally, with S5 and S12 plays an important role in translational accuracy. The protein is Small ribosomal subunit protein uS4 of Shewanella woodyi (strain ATCC 51908 / MS32).